A 369-amino-acid chain; its full sequence is 3-dehydroquinate synthase (369 aa).

NAD(+)-binding positions include aspartate 75 to lysine 80, glycine 109 to aspartate 113, threonine 133 to threonine 134, lysine 146, lysine 155, and threonine 173 to threonine 176. Zn(2+) is bound by residues glutamate 188, histidine 251, and histidine 268.

The protein belongs to the sugar phosphate cyclases superfamily. Dehydroquinate synthase family. The cofactor is Co(2+). Zn(2+) is required as a cofactor. Requires NAD(+) as cofactor.

The protein localises to the cytoplasm. It catalyses the reaction 7-phospho-2-dehydro-3-deoxy-D-arabino-heptonate = 3-dehydroquinate + phosphate. It participates in metabolic intermediate biosynthesis; chorismate biosynthesis; chorismate from D-erythrose 4-phosphate and phosphoenolpyruvate: step 2/7. Its function is as follows. Catalyzes the conversion of 3-deoxy-D-arabino-heptulosonate 7-phosphate (DAHP) to dehydroquinate (DHQ). This chain is 3-dehydroquinate synthase, found in Legionella pneumophila subsp. pneumophila (strain Philadelphia 1 / ATCC 33152 / DSM 7513).